Reading from the N-terminus, the 383-residue chain is Acetylornithine deacetylase (383 aa).

His80 contacts Zn(2+). Asp82 is a catalytic residue. Asp112 is a Zn(2+) binding site. Glu144 is a catalytic residue. Residues Glu145, Glu169, and His355 each coordinate Zn(2+).

This sequence belongs to the peptidase M20A family. ArgE subfamily. Homodimer. Zn(2+) serves as cofactor. It depends on Co(2+) as a cofactor. Glutathione is required as a cofactor.

The protein localises to the cytoplasm. The enzyme catalyses N(2)-acetyl-L-ornithine + H2O = L-ornithine + acetate. It participates in amino-acid biosynthesis; L-arginine biosynthesis; L-ornithine from N(2)-acetyl-L-ornithine (linear): step 1/1. Catalyzes the hydrolysis of the amide bond of N(2)-acetylated L-amino acids. Cleaves the acetyl group from N-acetyl-L-ornithine to form L-ornithine, an intermediate in L-arginine biosynthesis pathway, and a branchpoint in the synthesis of polyamines. In Escherichia coli O9:H4 (strain HS), this protein is Acetylornithine deacetylase.